The chain runs to 556 residues: Formate--tetrahydrofolate ligase (556 aa).

65 to 72 contributes to the ATP binding site; it reads TPAGEGKS.

Belongs to the formate--tetrahydrofolate ligase family.

It catalyses the reaction (6S)-5,6,7,8-tetrahydrofolate + formate + ATP = (6R)-10-formyltetrahydrofolate + ADP + phosphate. It participates in one-carbon metabolism; tetrahydrofolate interconversion. The polypeptide is Formate--tetrahydrofolate ligase (Enterococcus faecalis (strain ATCC 700802 / V583)).